The following is a 200-amino-acid chain: dTTP/UTP pyrophosphatase (200 aa).

Residue Asp-72 is the Proton acceptor of the active site.

The protein belongs to the Maf family. YhdE subfamily. It depends on a divalent metal cation as a cofactor.

The protein localises to the cytoplasm. It catalyses the reaction dTTP + H2O = dTMP + diphosphate + H(+). It carries out the reaction UTP + H2O = UMP + diphosphate + H(+). Functionally, nucleoside triphosphate pyrophosphatase that hydrolyzes dTTP and UTP. May have a dual role in cell division arrest and in preventing the incorporation of modified nucleotides into cellular nucleic acids. The sequence is that of dTTP/UTP pyrophosphatase from Pseudomonas savastanoi pv. phaseolicola (strain 1448A / Race 6) (Pseudomonas syringae pv. phaseolicola (strain 1448A / Race 6)).